The sequence spans 155 residues: MNQAELQRHMEEVSLQFFQKEFRHQAVFNARLRTTGGRYLLKSHNIEMNPKYLENFGLAYFIGIMKHELCHYHLHLEKKGYQHRDQDFRELLKKVDAPRFCATIPREITMHEYTCKSCGKSFLRQRRFNVNRYRCGSCGGKLIQTGSKKIYTENA.

In terms of domain architecture, SprT-like spans 7 to 145 (QRHMEEVSLQ…GSCGGKLIQT (139 aa)). A Zn(2+)-binding site is contributed by His67. Glu68 is a catalytic residue. Residue His71 participates in Zn(2+) binding.

The protein belongs to the SprT family. Requires Zn(2+) as cofactor.

The protein localises to the cytoplasm. This is Protein SprT-like from Listeria monocytogenes serotype 4b (strain CLIP80459).